We begin with the raw amino-acid sequence, 236 residues long: UPF0502 protein BceJ2315_62050 (236 aa).

This sequence belongs to the UPF0502 family.

The polypeptide is UPF0502 protein BceJ2315_62050 (Burkholderia cenocepacia (strain ATCC BAA-245 / DSM 16553 / LMG 16656 / NCTC 13227 / J2315 / CF5610) (Burkholderia cepacia (strain J2315))).